A 310-amino-acid chain; its full sequence is UDP-N-acetylenolpyruvoylglucosamine reductase (310 aa).

Residues 35–203 form the FAD-binding PCMH-type domain; the sequence is RAGGAAEALV…TRVRFALRKG (169 aa). The active site involves arginine 183. Serine 232 serves as the catalytic Proton donor. Glutamate 302 is a catalytic residue.

The protein belongs to the MurB family. FAD serves as cofactor.

The protein resides in the cytoplasm. The enzyme catalyses UDP-N-acetyl-alpha-D-muramate + NADP(+) = UDP-N-acetyl-3-O-(1-carboxyvinyl)-alpha-D-glucosamine + NADPH + H(+). It functions in the pathway cell wall biogenesis; peptidoglycan biosynthesis. Cell wall formation. The sequence is that of UDP-N-acetylenolpyruvoylglucosamine reductase from Myxococcus xanthus (strain DK1622).